Reading from the N-terminus, the 363-residue chain is S-adenosylmethionine:tRNA ribosyltransferase-isomerase (363 aa).

The protein belongs to the QueA family. In terms of assembly, monomer.

It is found in the cytoplasm. The enzyme catalyses 7-aminomethyl-7-carbaguanosine(34) in tRNA + S-adenosyl-L-methionine = epoxyqueuosine(34) in tRNA + adenine + L-methionine + 2 H(+). It participates in tRNA modification; tRNA-queuosine biosynthesis. Functionally, transfers and isomerizes the ribose moiety from AdoMet to the 7-aminomethyl group of 7-deazaguanine (preQ1-tRNA) to give epoxyqueuosine (oQ-tRNA). This chain is S-adenosylmethionine:tRNA ribosyltransferase-isomerase, found in Magnetococcus marinus (strain ATCC BAA-1437 / JCM 17883 / MC-1).